The primary structure comprises 308 residues: uncharacterized protein (308 aa).

5 helical membrane-spanning segments follow: residues 46-66, 82-102, 159-179, 190-210, and 271-291; these read GISA…GVLQ, LLAA…LLWM, AAIG…FLIF, FFQV…IGVL, and LYLF…SLYF.

Belongs to the oxidase-dependent Fe transporter (OFeT) (TC 9.A.10.1) family.

The protein resides in the cell membrane. This is an uncharacterized protein from Synechocystis sp. (strain ATCC 27184 / PCC 6803 / Kazusa).